The sequence spans 660 residues: T-box protein H15 (660 aa).

Polar residues predominate over residues 1–11 (MLLSNQPANTK). Disordered stretches follow at residues 1 to 72 (MLLS…NHNQ), 90 to 122 (GGNA…DDVD), and 169 to 266 (QQQQ…PKIV). Residues 12–22 (PQQTPSPSQTQ) are compositionally biased toward low complexity. Over residues 23–33 (NFKSKLQQQIV) the composition is skewed to polar residues. Positions 35–47 (AAAAAAANIANGS) are enriched in low complexity. Positions 48–71 (SHHHHHQNHHHHHPLNNHHNHNHN) are enriched in basic residues. 2 stretches are compositionally biased toward low complexity: residues 93–108 (APSS…SPAS) and 169–179 (QQQQQQQQQRQ). Residues 180–198 (QTHHHATTGKQQRQHHNHH) are compositionally biased toward basic residues. Residues 199-233 (SSNTNNSSNSGNSNTNSKSSSQRGRSAAAVGAAAT) are compositionally biased toward low complexity. Positions 234–243 (PSPPPPPPSQ) are enriched in pro residues. Residues 286-472 (LWDKFHELGT…SNPFAKGFRD (187 aa)) constitute a DNA-binding region (T-box). Residues 598–660 (NRTPPPSMAV…PPASNRAESP (63 aa)) are disordered. Residues 600-613 (TPPPSMAVAPPAPA) are compositionally biased toward pro residues. The span at 614 to 624 (TPTSSCGSASP) shows a compositional bias: low complexity. Over residues 643-660 (QVPQHQASPPASNRAESP) the composition is skewed to polar residues.

It localises to the nucleus. The protein is T-box protein H15 (H15) of Drosophila melanogaster (Fruit fly).